A 338-amino-acid polypeptide reads, in one-letter code: Biotin synthase (338 aa).

The Radical SAM core domain occupies 46-270; the sequence is NEVQLSTLLS…VAVARITMPA (225 aa). Residues Cys61, Cys65, and Cys68 each contribute to the [4Fe-4S] cluster site. [2Fe-2S] cluster-binding residues include Cys105, Cys136, Cys196, and Arg274.

This sequence belongs to the radical SAM superfamily. Biotin synthase family. As to quaternary structure, homodimer. The cofactor is [4Fe-4S] cluster. Requires [2Fe-2S] cluster as cofactor.

The enzyme catalyses (4R,5S)-dethiobiotin + (sulfur carrier)-SH + 2 reduced [2Fe-2S]-[ferredoxin] + 2 S-adenosyl-L-methionine = (sulfur carrier)-H + biotin + 2 5'-deoxyadenosine + 2 L-methionine + 2 oxidized [2Fe-2S]-[ferredoxin]. Its pathway is cofactor biosynthesis; biotin biosynthesis; biotin from 7,8-diaminononanoate: step 2/2. In terms of biological role, catalyzes the conversion of dethiobiotin (DTB) to biotin by the insertion of a sulfur atom into dethiobiotin via a radical-based mechanism. This Rhizorhabdus wittichii (strain DSM 6014 / CCUG 31198 / JCM 15750 / NBRC 105917 / EY 4224 / RW1) (Sphingomonas wittichii) protein is Biotin synthase.